Consider the following 63-residue polypeptide: Large ribosomal subunit protein bL28 (63 aa).

This sequence belongs to the bacterial ribosomal protein bL28 family.

This chain is Large ribosomal subunit protein bL28, found in Clostridium novyi (strain NT).